The primary structure comprises 390 residues: Two-component response regulator ORR29 (390 aa).

The Response regulatory domain maps to 13-130 (SAMVIDEDKC…TIKNLWQYVD (118 aa)). A 4-aspartylphosphate modification is found at Asp65. The segment at residues 169–226 (KKYYLMWTPHLQKKFLHALQILGKDASPKNIKKIMGVDNIDCRQIAAHLQKHRLRLTK) is a DNA-binding region (myb-like GARP). 2 disordered regions span residues 233–271 (FTTD…QPTE) and 303–339 (SKHS…SGDH). Polar residues predominate over residues 257-271 (NASTLQPRSNTQPTE).

It belongs to the ARR family. Type-B subfamily. Two-component system major event consists of a His-to-Asp phosphorelay between a sensor histidine kinase (HK) and a response regulator (RR). In plants, the His-to-Asp phosphorelay involves an additional intermediate named Histidine-containing phosphotransfer protein (HPt). This multistep phosphorelay consists of a His-Asp-His-Asp sequential transfer of a phosphate group between first a His and an Asp of the HK protein, followed by the transfer to a conserved His of the HPt protein and finally the transfer to an Asp in the receiver domain of the RR protein.

Its subcellular location is the cytoplasm. The protein resides in the cytosol. It localises to the nucleus. Functionally, transcriptional activator that binds specific DNA sequence. Functions as a response regulator involved in His-to-Asp phosphorelay signal transduction system. Phosphorylation of the Asp residue in the receiver domain activates the ability of the protein to promote the transcription of target genes. May directly activate some type-A response regulators in response to cytokinins. Functions as a response regulator in response to cytokinins. This Oryza sativa subsp. japonica (Rice) protein is Two-component response regulator ORR29.